A 1377-amino-acid chain; its full sequence is DNA-directed RNA polymerase subunit beta'' (1377 aa).

Zn(2+) contacts are provided by C224, C294, C301, and C304.

Belongs to the RNA polymerase beta' chain family. RpoC2 subfamily. In terms of assembly, in plastids the minimal PEP RNA polymerase catalytic core is composed of four subunits: alpha, beta, beta', and beta''. When a (nuclear-encoded) sigma factor is associated with the core the holoenzyme is formed, which can initiate transcription. Requires Zn(2+) as cofactor.

It localises to the plastid. The protein resides in the chloroplast. It catalyses the reaction RNA(n) + a ribonucleoside 5'-triphosphate = RNA(n+1) + diphosphate. Its function is as follows. DNA-dependent RNA polymerase catalyzes the transcription of DNA into RNA using the four ribonucleoside triphosphates as substrates. This Calycanthus floridus var. glaucus (Eastern sweetshrub) protein is DNA-directed RNA polymerase subunit beta''.